We begin with the raw amino-acid sequence, 323 residues long: DNA-directed RNA polymerase subunit alpha (323 aa).

The alpha N-terminal domain (alpha-NTD) stretch occupies residues Met1–Asn225. An alpha C-terminal domain (alpha-CTD) region spans residues Pro243 to Ser323.

The protein belongs to the RNA polymerase alpha chain family. In terms of assembly, homodimer. The RNAP catalytic core consists of 2 alpha, 1 beta, 1 beta' and 1 omega subunit. When a sigma factor is associated with the core the holoenzyme is formed, which can initiate transcription.

It carries out the reaction RNA(n) + a ribonucleoside 5'-triphosphate = RNA(n+1) + diphosphate. DNA-dependent RNA polymerase catalyzes the transcription of DNA into RNA using the four ribonucleoside triphosphates as substrates. This Roseiflexus castenholzii (strain DSM 13941 / HLO8) protein is DNA-directed RNA polymerase subunit alpha.